Reading from the N-terminus, the 203-residue chain is Probable cytochrome c oxidase subunit 3 (203 aa).

5 consecutive transmembrane segments (helical) span residues 30 to 50 (IVWL…YFTA), 70 to 90 (AVPV…GVFA), 102 to 122 (WYVI…YEYY), 142 to 162 (LATG…IFLL), and 179 to 199 (IVVS…FTVI).

The protein belongs to the cytochrome c oxidase subunit 3 family.

The protein resides in the cell membrane. The catalysed reaction is 4 Fe(II)-[cytochrome c] + O2 + 8 H(+)(in) = 4 Fe(III)-[cytochrome c] + 2 H2O + 4 H(+)(out). The polypeptide is Probable cytochrome c oxidase subunit 3 (ctaE) (Mycolicibacterium paratuberculosis (strain ATCC BAA-968 / K-10) (Mycobacterium paratuberculosis)).